A 359-amino-acid chain; its full sequence is Ferredoxin--NADP reductase (359 aa).

FAD is bound by residues D48, Q56, Y61, A101, F139, D304, and S345. Residues 340–359 form a disordered region; that stretch reads VHTHTSNDTNLQSRLHAAAE. The span at 341–352 shows a compositional bias: polar residues; sequence HTHTSNDTNLQS.

It belongs to the ferredoxin--NADP reductase type 2 family. Homodimer. FAD serves as cofactor.

It carries out the reaction 2 reduced [2Fe-2S]-[ferredoxin] + NADP(+) + H(+) = 2 oxidized [2Fe-2S]-[ferredoxin] + NADPH. This is Ferredoxin--NADP reductase from Ralstonia nicotianae (strain ATCC BAA-1114 / GMI1000) (Ralstonia solanacearum).